We begin with the raw amino-acid sequence, 179 residues long: Small heat shock protein hspK (179 aa).

The region spanning 32–178 (HRINIWRPTV…DRLKIPIQSK (147 aa)) is the sHSP domain. The tract at residues 80–122 (KKSKGGLNNLPSSSSSINSDSTTNTNTNTTTTTTTAPPPPSDA) is disordered. Residues 87-114 (NNLPSSSSSINSDSTTNTNTNTTTTTTT) show a composition bias toward low complexity.

This sequence belongs to the small heat shock protein (HSP20) family.

The protein is Small heat shock protein hspK (hspK) of Dictyostelium discoideum (Social amoeba).